Here is a 636-residue protein sequence, read N- to C-terminus: Protein cueball (636 aa).

The signal sequence occupies residues 1–27; that stretch reads MKLCTSQQFGVAVLFIVLNICSPLADA. The Extracellular segment spans residues 28-517; sequence SPIAWDFAVT…ADGPSSLRSG (490 aa). N83 and N109 each carry an N-linked (GlcNAc...) asparagine glycan. LDL-receptor class B repeat units lie at residues 122–169, 170–214, and 215–260; these read RNLF…DICR, RQLY…DQLS, and DRIF…TEDT. N-linked (GlcNAc...) asparagine glycosylation occurs at N190. Residues N285 and N339 are each glycosylated (N-linked (GlcNAc...) asparagine). EGF-like domains follow at residues 350–384 and 419–456; these read RMDA…ARCE and EYYK…TRCE. Cystine bridges form between C359/C372, C374/C383, C423/C433, C427/C444, and C446/C455. Residues N449, N458, and N493 are each glycosylated (N-linked (GlcNAc...) asparagine). The chain crosses the membrane as a helical span at residues 518–538; the sequence is SVIIVLVVGIVSSLALVAVIV. The Cytoplasmic portion of the chain corresponds to 539–636; it reads HGLRLIYKPK…IHNMEDDLLT (98 aa).

This sequence belongs to the cueball family.

It localises to the cell membrane. In terms of biological role, has a role in spermatogenesis and oogenesis. This is Protein cueball from Drosophila virilis (Fruit fly).